The primary structure comprises 174 residues: Ribosome maturation factor RimM (174 aa).

The 75-residue stretch at 96–170 folds into the PRC barrel domain; sequence PDEFYDHELE…YVVIDPPEGL (75 aa).

This sequence belongs to the RimM family. Binds ribosomal protein uS19.

The protein localises to the cytoplasm. In terms of biological role, an accessory protein needed during the final step in the assembly of 30S ribosomal subunit, possibly for assembly of the head region. Essential for efficient processing of 16S rRNA. May be needed both before and after RbfA during the maturation of 16S rRNA. It has affinity for free ribosomal 30S subunits but not for 70S ribosomes. The sequence is that of Ribosome maturation factor RimM from Nocardia farcinica (strain IFM 10152).